We begin with the raw amino-acid sequence, 309 residues long: MEKYEKLEKVGEGTYGKVYKAMEKGTGKLVALKKTRLEMDEEGIPPTALREISLLQMLSTSIYVVRLLCVEHVHQPSTKSQSTKSNLYLVFEYLDTDLKKFIDSYRKGPNPKPLEPFLIQKLMFQLCKGVAHCHSHGVLHRDLKPQNLLLVKDKELLKIADLGLGRAFTVPLKSYTHEIVTLWYRAPEVLLGSTHYSTGVDMWSVGCIFAEMVRRQALFPGDSEFQQLLHIFRLLGTPTEQQWPGVSTLRDWHVYPKWEPQDLTLAVPSLSPQGVDLLTKMLKYNPAERISAKTALDHPYFDSLDKSQF.

A Protein kinase domain is found at 4-301 (YEKLEKVGEG…AKTALDHPYF (298 aa)). ATP is bound by residues 10 to 18 (VGEGTYGKV) and Lys33. Residue Tyr15 is modified to Phosphotyrosine. Asp142 serves as the catalytic Proton acceptor. The residue at position 176 (Thr176) is a Phosphothreonine; by CAK.

It belongs to the protein kinase superfamily. CMGC Ser/Thr protein kinase family. CDC2/CDKX subfamily. As to quaternary structure, interacts with CKS1. Interacts with CYCU3-1. Interacts with SIM, SMR1 and SMR2. As to expression, highly expressed in guard cells and stomatal precursor cells of cotyledons. Expressed in roots, stems, flowers and siliques.

It is found in the nucleus. It catalyses the reaction L-seryl-[protein] + ATP = O-phospho-L-seryl-[protein] + ADP + H(+). It carries out the reaction L-threonyl-[protein] + ATP = O-phospho-L-threonyl-[protein] + ADP + H(+). The catalysed reaction is [DNA-directed RNA polymerase] + ATP = phospho-[DNA-directed RNA polymerase] + ADP + H(+). Its activity is regulated as follows. Phosphorylation at Thr-14 or Tyr-15 inactivates the enzyme, while phosphorylation at Thr-176 activates it. May control G2/M (mitosis) phase progression. Plays a role in regulating seedling growth in darkness via regulation of hypocotyl cell elongation and cotyledon cell development. Plays a role in stomatal development. Required to suppress endoreduplication. Together with CDKB1-2, promotes both the last division in the stomatal cell lineage as well as the number of stomata. In collaboration with MYB124 and MYB88, restrict the G1/S transition and chloroplast and nuclear number during stomatal formation, and normally maintain fate and developmental progression throughout the stomatal cell lineage. The chain is Cyclin-dependent kinase B1-1 (CDKB1-1) from Arabidopsis thaliana (Mouse-ear cress).